We begin with the raw amino-acid sequence, 267 residues long: Hydroxyethylthiazole kinase (267 aa).

M44 contributes to the substrate binding site. ATP contacts are provided by R120 and T165. G192 lines the substrate pocket.

The protein belongs to the Thz kinase family. The cofactor is Mg(2+).

It catalyses the reaction 5-(2-hydroxyethyl)-4-methylthiazole + ATP = 4-methyl-5-(2-phosphooxyethyl)-thiazole + ADP + H(+). It functions in the pathway cofactor biosynthesis; thiamine diphosphate biosynthesis; 4-methyl-5-(2-phosphoethyl)-thiazole from 5-(2-hydroxyethyl)-4-methylthiazole: step 1/1. In terms of biological role, catalyzes the phosphorylation of the hydroxyl group of 4-methyl-5-beta-hydroxyethylthiazole (THZ). In Carboxydothermus hydrogenoformans (strain ATCC BAA-161 / DSM 6008 / Z-2901), this protein is Hydroxyethylthiazole kinase.